A 115-amino-acid chain; its full sequence is Probable 4-amino-4-deoxy-L-arabinose-phosphoundecaprenol flippase subunit ArnE (115 aa).

Transmembrane regions (helical) follow at residues 1–21, 43–63, 65–85, and 93–113; these read MIVG…GQLC, WLAL…NVLQ, LPLS…TLAA, and TTAR…LMSI. Residues 44–113 enclose the EamA domain; that stretch reads LALAVLLLGL…IMLGILLMSI (70 aa).

This sequence belongs to the ArnE family. Heterodimer of ArnE and ArnF.

The protein localises to the cell inner membrane. It functions in the pathway bacterial outer membrane biogenesis; lipopolysaccharide biosynthesis. Translocates 4-amino-4-deoxy-L-arabinose-phosphoundecaprenol (alpha-L-Ara4N-phosphoundecaprenol) from the cytoplasmic to the periplasmic side of the inner membrane. The protein is Probable 4-amino-4-deoxy-L-arabinose-phosphoundecaprenol flippase subunit ArnE of Serratia proteamaculans (strain 568).